The primary structure comprises 63 residues: U-reduvitoxin-Pr4a (63 aa).

A signal peptide spans 1–19; it reads MKIFGLFLLIATYMALAFA. 3 disulfide bridges follow: cysteine 24–cysteine 40, cysteine 31–cysteine 45, and cysteine 39–cysteine 52.

It belongs to the venom Ptu1-like knottin family. Expressed by the venom gland.

The protein localises to the secreted. Functionally, binds reversibly and blocks P/Q-type voltage-gated calcium channels (Cav). The polypeptide is U-reduvitoxin-Pr4a (Platymeris rhadamanthus (Red spot assassin bug)).